The following is an 83-amino-acid chain: Kunitz-type serine protease inhibitor homolog beta-bungarotoxin B5 chain (83 aa).

The signal sequence occupies residues 1 to 24 (MSSGGLLLLLGLLTFCAELTPVSS). Residues 31–81 (CNLPPDPGPCHDNKFAFYHHPASNKCKEFVYGGCGGNDNRFKTRNKCQCTC) form the BPTI/Kunitz inhibitor domain. Disulfide bonds link Cys31-Cys81, Cys40-Cys64, and Cys56-Cys77.

Belongs to the venom Kunitz-type family. Heterodimer; disulfide-linked. The A chains have phospholipase A2 activity and the B chains show homology with the basic protease inhibitors. Expressed by the venom gland.

The protein localises to the secreted. Its function is as follows. Beta-bungarotoxins are presynaptic neurotoxins of the venom. The B chain is homologous to venom basic protease inhibitors but has no protease inhibitor activity and blocks voltage-gated potassium channels (Kv). This Bungarus multicinctus (Many-banded krait) protein is Kunitz-type serine protease inhibitor homolog beta-bungarotoxin B5 chain.